We begin with the raw amino-acid sequence, 197 residues long: MTALILLLAYLLGSIPFGLLVGKIGYGIDIREHGSGNLGGTNTFRVLGAKAGTIVIVGDMLKGTLAASLPMLFSVPVHPLLAGAIAVVGHMYPVFAKFRGGKAVATSGGVMLFYSPLFFLSLIAVFLVVLAVSRYVSLSSMAAALYAVVYTVFFTDDIPLTVAVLLLASFIFYRHRANIQRILNKTEPKVKWPGKRS.

The next 4 helical transmembrane spans lie at 1-21 (MTAL…GLLV), 69-89 (LPML…AVVG), 110-130 (VMLF…LVVL), and 152-172 (VFFT…SFIF).

The protein belongs to the PlsY family. In terms of assembly, probably interacts with PlsX.

The protein localises to the cell membrane. It catalyses the reaction an acyl phosphate + sn-glycerol 3-phosphate = a 1-acyl-sn-glycero-3-phosphate + phosphate. The protein operates within lipid metabolism; phospholipid metabolism. Catalyzes the transfer of an acyl group from acyl-phosphate (acyl-PO(4)) to glycerol-3-phosphate (G3P) to form lysophosphatidic acid (LPA). This enzyme utilizes acyl-phosphate as fatty acyl donor, but not acyl-CoA or acyl-ACP. The sequence is that of Glycerol-3-phosphate acyltransferase from Geobacillus kaustophilus (strain HTA426).